The primary structure comprises 259 residues: Protein YIF1B (259 aa).

Methionine 1 bears the N-acetylmethionine mark. A disordered region spans residues 1–61; sequence MHATGLAAPA…QPSPGSLGYP (61 aa). Residues 9–153 lie on the Cytoplasmic side of the membrane; that stretch reads PAGTPRLRKW…APRFDINAPD (145 aa). Threonine 12 carries the phosphothreonine modification. Positions 14 to 24 are enriched in basic residues; the sequence is RLRKWPSKRRV. At serine 64 the chain carries Phosphoserine. The helical transmembrane segment at 154-174 threads the bilayer; sequence LYIPAMAFITYILVAGLALGT. The Extracellular portion of the chain corresponds to 175–186; that stretch reads QDRMIGGVLTGL. Residues 187 to 207 form a helical membrane-spanning segment; that stretch reads LFGKIGYYLVLAWCCVSIFVF. The Cytoplasmic segment spans residues 208–237; it reads MIRTLRLKILAQAAAEGVPVRGARNQLRMY. A helical transmembrane segment spans residues 238–258; sequence LTMAVAAAQPVLMYWLTFHLV. Arginine 259 is a topological domain (extracellular).

This sequence belongs to the YIF1 family. In terms of assembly, interacts with HTR1A (via C-terminus). Interacts with ABCB9 (via TMD0); this interaction allows (but is not essential) the ER-to-Golgi trafficking and strongly depends on a salt bridge within TMD0. As to expression, highly expressed in brain. Expressed in heart, kidney, and lung and lower levels in spleen, muscle, and intestine (at protein level). Expressed in serotoninergic neurons (at protein level).

Its subcellular location is the endoplasmic reticulum membrane. It is found in the golgi apparatus membrane. The protein localises to the endoplasmic reticulum-Golgi intermediate compartment membrane. In terms of biological role, functions in endoplasmic reticulum to Golgi vesicle-mediated transport and regulates the proper organization of the endoplasmic reticulum and the Golgi. Plays a key role in targeting to neuronal dendrites receptors such as HTR1A. Plays also a role in primary cilium and sperm flagellum assembly probably through protein transport to these compartments. The chain is Protein YIF1B from Rattus norvegicus (Rat).